We begin with the raw amino-acid sequence, 511 residues long: Bifunctional purine biosynthesis protein PurH (511 aa).

Residues 1–145 (MKKRALVSVS…KNHKFVSVIV (145 aa)) form the MGS-like domain.

The protein belongs to the PurH family.

It carries out the reaction (6R)-10-formyltetrahydrofolate + 5-amino-1-(5-phospho-beta-D-ribosyl)imidazole-4-carboxamide = 5-formamido-1-(5-phospho-D-ribosyl)imidazole-4-carboxamide + (6S)-5,6,7,8-tetrahydrofolate. The enzyme catalyses IMP + H2O = 5-formamido-1-(5-phospho-D-ribosyl)imidazole-4-carboxamide. It functions in the pathway purine metabolism; IMP biosynthesis via de novo pathway; 5-formamido-1-(5-phospho-D-ribosyl)imidazole-4-carboxamide from 5-amino-1-(5-phospho-D-ribosyl)imidazole-4-carboxamide (10-formyl THF route): step 1/1. It participates in purine metabolism; IMP biosynthesis via de novo pathway; IMP from 5-formamido-1-(5-phospho-D-ribosyl)imidazole-4-carboxamide: step 1/1. The protein is Bifunctional purine biosynthesis protein PurH of Bacillus cereus (strain 03BB102).